The chain runs to 287 residues: Energy-coupling factor transporter ATP-binding protein EcfA1 (287 aa).

An ABC transporter domain is found at 6–248 (IVAEGVSYAY…ADRIRALRLD (243 aa)). 47–54 (GMNGSGKS) is a binding site for ATP.

It belongs to the ABC transporter superfamily. Energy-coupling factor EcfA family. As to quaternary structure, forms a stable energy-coupling factor (ECF) transporter complex composed of 2 membrane-embedded substrate-binding proteins (S component), 2 ATP-binding proteins (A component) and 2 transmembrane proteins (T component).

It localises to the cell membrane. Its function is as follows. ATP-binding (A) component of a common energy-coupling factor (ECF) ABC-transporter complex. Unlike classic ABC transporters this ECF transporter provides the energy necessary to transport a number of different substrates. The protein is Energy-coupling factor transporter ATP-binding protein EcfA1 of Symbiobacterium thermophilum (strain DSM 24528 / JCM 14929 / IAM 14863 / T).